We begin with the raw amino-acid sequence, 298 residues long: 33 kDa chaperonin (298 aa).

Cystine bridges form between Cys-239-Cys-241 and Cys-272-Cys-275.

Belongs to the HSP33 family. Under oxidizing conditions two disulfide bonds are formed involving the reactive cysteines. Under reducing conditions zinc is bound to the reactive cysteines and the protein is inactive.

It is found in the cytoplasm. Its function is as follows. Redox regulated molecular chaperone. Protects both thermally unfolding and oxidatively damaged proteins from irreversible aggregation. Plays an important role in the bacterial defense system toward oxidative stress. The chain is 33 kDa chaperonin from Picosynechococcus sp. (strain ATCC 27264 / PCC 7002 / PR-6) (Agmenellum quadruplicatum).